The following is a 424-amino-acid chain: Protein CapL (424 aa).

It belongs to the UDP-glucose/GDP-mannose dehydrogenase family.

Its pathway is capsule biogenesis; capsule polysaccharide biosynthesis. Required for the biosynthesis of type 1 capsular polysaccharide. This chain is Protein CapL (capL), found in Staphylococcus aureus.